The sequence spans 176 residues: SsrA-binding protein (176 aa).

The disordered stretch occupies residues 1–33; it reads MTEAGAKKAAGKKSGKGKGKNAKKNQPNITPVA. Over residues 9–23 the composition is skewed to basic residues; that stretch reads AAGKKSGKGKGKNAK.

This sequence belongs to the SmpB family.

It localises to the cytoplasm. Its function is as follows. Required for rescue of stalled ribosomes mediated by trans-translation. Binds to transfer-messenger RNA (tmRNA), required for stable association of tmRNA with ribosomes. tmRNA and SmpB together mimic tRNA shape, replacing the anticodon stem-loop with SmpB. tmRNA is encoded by the ssrA gene; the 2 termini fold to resemble tRNA(Ala) and it encodes a 'tag peptide', a short internal open reading frame. During trans-translation Ala-aminoacylated tmRNA acts like a tRNA, entering the A-site of stalled ribosomes, displacing the stalled mRNA. The ribosome then switches to translate the ORF on the tmRNA; the nascent peptide is terminated with the 'tag peptide' encoded by the tmRNA and targeted for degradation. The ribosome is freed to recommence translation, which seems to be the essential function of trans-translation. The sequence is that of SsrA-binding protein from Rhodopirellula baltica (strain DSM 10527 / NCIMB 13988 / SH1).